Reading from the N-terminus, the 425-residue chain is Histone-binding protein RBBP4 (425 aa).

At alanine 2 the chain carries N-acetylalanine. 7 WD repeats span residues tyrosine 32 to glycine 125, glutamate 126 to glycine 175, histidine 176 to phenylalanine 223, glycine 225 to aspartate 270, alanine 271 to glutamate 314, serine 315 to glycine 371, and glycine 372 to methionine 404.

This sequence belongs to the WD repeat RBAP46/RBAP48/MSI1 family. Binds directly to histone H4, probably via helix 1 of the histone fold, a region that is not accessible when histone H4 is in chromatin. Forms a large corepressor complex that contains ncor1, sin3a and possibly sin3b, histone deacetylases hdac2, hdac1, rbbp4 and possibly rbbp7.

The protein resides in the nucleus. It localises to the chromosome. The protein localises to the telomere. Core histone-binding subunit that may target chromatin assembly factors, chromatin remodeling factors and histone deacetylases to their histone substrates in a manner that is regulated by nucleosomal DNA. Component of several complexes which regulate chromatin metabolism. This is Histone-binding protein RBBP4 (rbbp4) from Xenopus tropicalis (Western clawed frog).